The sequence spans 178 residues: Protein GrpE (178 aa).

The protein belongs to the GrpE family. In terms of assembly, homodimer.

It is found in the cytoplasm. In terms of biological role, participates actively in the response to hyperosmotic and heat shock by preventing the aggregation of stress-denatured proteins, in association with DnaK and GrpE. It is the nucleotide exchange factor for DnaK and may function as a thermosensor. Unfolded proteins bind initially to DnaJ; upon interaction with the DnaJ-bound protein, DnaK hydrolyzes its bound ATP, resulting in the formation of a stable complex. GrpE releases ADP from DnaK; ATP binding to DnaK triggers the release of the substrate protein, thus completing the reaction cycle. Several rounds of ATP-dependent interactions between DnaJ, DnaK and GrpE are required for fully efficient folding. The sequence is that of Protein GrpE from Rickettsia africae (strain ESF-5).